The sequence spans 540 residues: DNA-(apurinic or apyrimidinic site) endonuclease (540 aa).

Asn206 and Glu239 together coordinate Mg(2+). Positions 256–276 (NNKVYGGKKNEGEERNRGSVK) are disordered. Residues 263 to 276 (KKNEGEERNRGSVK) show a composition bias toward basic and acidic residues. Mg(2+)-binding residues include Asp400, Asn402, Asp530, and His531. The active-site Proton acceptor is His531.

Belongs to the DNA repair enzymes AP/ExoA family. It depends on Mg(2+) as a cofactor. Requires Mn(2+) as cofactor. May be proteolytically cleaved.

The protein resides in the mitochondrion. It carries out the reaction Exonucleolytic cleavage in the 3'- to 5'-direction to yield nucleoside 5'-phosphates.. In terms of biological role, multifunctional protein that plays a central role in mitochondrial DNA base excision repair pathway induced by oxidative stress. Has apurinic/apyrimidinic (AP) endonuclease activity towards double-stranded DNA (dsDNA). Has nucleotide incision repair (NIR) activity; acts on dsDNA with oxidized bases thymine glycol and 5,6-dihydro-2'-deoxyuridine. Has 3'-5' exonuclease; can use dsDNA templates with 3'-OH termini including blunt-end, gapped and mismatched 3'-recessed. Has 3'-phosphatase activity; cleaves 3'-phosphate from blunt, recessed and gapped dsDNA templates, followed by 3'-5' exonuclease activity. Has RNase H-like activity; cleaves RNA on 3'-recessed RNA-DNA duplex. Plays a role in merosome infection of host erythrocytes. This chain is DNA-(apurinic or apyrimidinic site) endonuclease, found in Plasmodium berghei (strain Anka).